Here is a 450-residue protein sequence, read N- to C-terminus: MREVISIHIGQGGIQVGNACWDLFCLEHGIQPDGQMPSDKTIGGGDDAFNTFFSETGAGKHVPRAVFLDLEPTVCDEVRTGTYRQLFHPEQLISGKEDAANNFARGHYTIGKEIVDLCLDRIRKLADNCTGLQGFIGFHSVGGGTGSGLGSLLLERLSVDYGKKSKLTFTIYPSPQVSTAVVEPYNSVLSTHSLLEHTDVAVMLDNEAVYDICRRNLDIERPTYTNLNRLIAQVISSLTASLRFDGALNVDVTEFQTNLVPYPRIHFMLSSYAPVISAEKAYHEQLSVAEITNSSFEPASMMAKCDPRHGKYMACCMMYRGDVVPKDVNAAVATIKTKRTIQFVDWSPTGFKCGINYQPPTVVPGGDLAKVMRAVCMISNSTAIAEVFSRIDHKFDLMYAKRAFVHWYVGEGMEEGEFSEAREDLAALEKDYEEVGIETAEGEGEEEGME.

Residue Gln-11 participates in GTP binding. N6-acetyllysine is present on Lys-40. Residues Glu-71, Ser-140, Gly-144, Thr-145, Thr-179, Asn-206, and Asn-228 each coordinate GTP. Residue Glu-71 coordinates Mg(2+). The active site involves Glu-254.

The protein belongs to the tubulin family. Dimer of alpha and beta chains. A typical microtubule is a hollow water-filled tube with an outer diameter of 25 nm and an inner diameter of 15 nM. Alpha-beta heterodimers associate head-to-tail to form protofilaments running lengthwise along the microtubule wall with the beta-tubulin subunit facing the microtubule plus end conferring a structural polarity. Microtubules usually have 13 protofilaments but different protofilament numbers can be found in some organisms and specialized cells. Mg(2+) is required as a cofactor. In terms of processing, acetylation of alpha chains at Lys-40 stabilizes microtubules and affects affinity and processivity of microtubule motors. This modification has a role in multiple cellular functions, ranging from cell motility, cell cycle progression or cell differentiation to intracellular trafficking and signaling.

The protein localises to the cytoplasm. The protein resides in the cytoskeleton. It catalyses the reaction GTP + H2O = GDP + phosphate + H(+). Functionally, tubulin is the major constituent of microtubules, a cylinder consisting of laterally associated linear protofilaments composed of alpha- and beta-tubulin heterodimers. Microtubules grow by the addition of GTP-tubulin dimers to the microtubule end, where a stabilizing cap forms. Below the cap, tubulin dimers are in GDP-bound state, owing to GTPase activity of alpha-tubulin. This is Tubulin alpha chain from Euplotoides octocarinatus (Freshwater ciliate).